Here is a 67-residue protein sequence, read N- to C-terminus: DNA gyrase inhibitor YacG (67 aa).

Zn(2+) is bound by residues C8, C11, C27, and C31.

It belongs to the DNA gyrase inhibitor YacG family. As to quaternary structure, interacts with GyrB. It depends on Zn(2+) as a cofactor.

In terms of biological role, inhibits all the catalytic activities of DNA gyrase by preventing its interaction with DNA. Acts by binding directly to the C-terminal domain of GyrB, which probably disrupts DNA binding by the gyrase. The chain is DNA gyrase inhibitor YacG from Ralstonia pickettii (strain 12J).